Reading from the N-terminus, the 201-residue chain is Large ribosomal subunit protein uL4 (201 aa).

The tract at residues Ala-45–Gly-66 is disordered.

This sequence belongs to the universal ribosomal protein uL4 family. Part of the 50S ribosomal subunit.

Its function is as follows. One of the primary rRNA binding proteins, this protein initially binds near the 5'-end of the 23S rRNA. It is important during the early stages of 50S assembly. It makes multiple contacts with different domains of the 23S rRNA in the assembled 50S subunit and ribosome. Forms part of the polypeptide exit tunnel. The sequence is that of Large ribosomal subunit protein uL4 from Aeromonas hydrophila subsp. hydrophila (strain ATCC 7966 / DSM 30187 / BCRC 13018 / CCUG 14551 / JCM 1027 / KCTC 2358 / NCIMB 9240 / NCTC 8049).